The following is a 425-amino-acid chain: Formyl-CoA:oxalate CoA-transferase (425 aa).

Residues 17–18 (QS), Arg38, 72–75 (LDTK), 96–98 (NFG), Arg104, and 136–139 (KVYE) each bind CoA. Catalysis depends on Asp168, which acts as the Nucleophile. Substrate is bound at residue 247–249 (GGQ).

This sequence belongs to the CoA-transferase III family. Frc subfamily. Homodimer.

It carries out the reaction formyl-CoA + oxalate = oxalyl-CoA + formate. The protein operates within metabolic intermediate degradation; oxalate degradation; CO(2) and formate from oxalate: step 1/2. Involved in the catabolism of oxalate and in the adapatation to low pH via the induction of the oxalate-dependent acid tolerance response (ATR). Catalyzes the transfer of the CoA moiety from formyl-CoA to oxalate. The protein is Formyl-CoA:oxalate CoA-transferase of Bradyrhizobium diazoefficiens (strain JCM 10833 / BCRC 13528 / IAM 13628 / NBRC 14792 / USDA 110).